The sequence spans 328 residues: GMP reductase (328 aa).

C176 functions as the Thioimidate intermediate in the catalytic mechanism. An NADP(+)-binding site is contributed by 205 to 228 (IIADGGIRTHGDIAKSIRFGASMI).

It belongs to the IMPDH/GMPR family. GuaC type 2 subfamily.

The enzyme catalyses IMP + NH4(+) + NADP(+) = GMP + NADPH + 2 H(+). Its function is as follows. Catalyzes the irreversible NADPH-dependent deamination of GMP to IMP. It functions in the conversion of nucleobase, nucleoside and nucleotide derivatives of G to A nucleotides, and in maintaining the intracellular balance of A and G nucleotides. This chain is GMP reductase, found in Streptococcus pneumoniae serotype 4 (strain ATCC BAA-334 / TIGR4).